Here is a 46-residue protein sequence, read N- to C-terminus: Lariatin (46 aa).

The propeptide occupies 1–26; that stretch reads MTSQPSKKTYNAPSLVQRGKFARTTA. A cross-link (isoglutamyl glycine isopeptide (Gly-Glu)) is located at residues 27–34; sequence GSQLVYRE.

The linear precursor LarA is probably cleaved by the putative peptidase LarD, generating linear 18-residue Lariatin-A or 20-residue Lariatin-B. These linear peptides are probably cross-linked by LarB. Finally, lariatins A and B may be exported by ABC transporter LarE.

Functionally, peptide antibiotic with selective activity against Mycobacterium species (M.smegmatis, MIC=3.13 ug/ml and M.tuberculosis, MIC=0.39 ug/ml). it is plausible that the target of lariatins lies within the cell wall in mycobacteria. Peptide antibiotic with selective activity against Mycobacterium species (M.smegmatis, MIC=6.25 ug/ml). The sequence is that of Lariatin from Rhodococcus jostii.